A 151-amino-acid chain; its full sequence is MAARLLSLCARRLSVTAAVRGLPAAGVRWESSRAVISPSTVERKRQRQPTMHWQEDPESEDENVYAKNPDFHGYDQDPVVDVWNMRVVFFFGFSIVLVLGTTFMAYLPDYRMQEWARREAERLVKYREANGLPIMESNCFDPSKIQLPEDE.

Residues 1 to 29 (MAARLLSLCARRLSVTAAVRGLPAAGVRW) constitute a mitochondrion transit peptide. Residues 39-62 (STVERKRQRQPTMHWQEDPESEDE) are disordered. Residues 87–107 (VVFFFGFSIVLVLGTTFMAYL) form a helical membrane-spanning segment.

Belongs to the complex I NDUFB11 subunit family. As to quaternary structure, complex I is composed of 45 different subunits. Interacts with BCAP31.

The protein resides in the mitochondrion inner membrane. In terms of biological role, accessory subunit of the mitochondrial membrane respiratory chain NADH dehydrogenase (Complex I), that is believed not to be involved in catalysis. Complex I functions in the transfer of electrons from NADH to the respiratory chain. The immediate electron acceptor for the enzyme is believed to be ubiquinone. The chain is NADH dehydrogenase [ubiquinone] 1 beta subcomplex subunit 11, mitochondrial (NDUFB11) from Cricetulus griseus (Chinese hamster).